The sequence spans 917 residues: Auxin response factor 17 (917 aa).

A DNA-binding region (TF-B3) is located at residues 134 to 236 (FCKTLTASDT…QLLLGIRRAN (103 aa)). The tract at residues 571 to 649 (SVPNALSPFS…RPTAVPVPDP (79 aa)) is disordered. Composition is skewed to low complexity over residues 576–594 (LSPFSQLSSPSQSSPMTLQ) and 604–620 (SYPDTSMSSLSPSNTST). Residues 786 to 870 (ATFVKVYKSG…SCIKILSPQE (85 aa)) form the PB1 domain.

Belongs to the ARF family. In terms of assembly, homodimers and heterodimers. In terms of tissue distribution, expressed in roots, culms, leaves and young panicles.

It localises to the nucleus. In terms of biological role, auxin response factors (ARFs) are transcriptional factors that bind specifically to the DNA sequence 5'-TGTCTC-3' found in the auxin-responsive promoter elements (AuxREs). This is Auxin response factor 17 (ARF17) from Oryza sativa subsp. japonica (Rice).